Consider the following 346-residue polypeptide: MAGFFYLGGRDNNSNNNKQDHHQVDKDHHHQDKSNYLYLYKDEIYNNNKGFEIWPPQYFQQQEHQQQQQQQQHASAPANFYSFGMVPSGSSSNNNNNRSRSLYFNVVSDHEPGGFTVTRQGGMNCQDCGNQAKKDCPHMRCRTCCKSRGFHCQTHVKSTWVPAAKRRERLAQLASLQHHSASSRETQNAKRLREASGGDNNDDKDHSGGGGSALANTRVVNANSNSGLEVSQHLPPEVNSPAIFRCVRVSSIEEDEDDQAYAYQTAVNIGGHIFKGILYDQGPEHQDNHHLNLLASTATTTNVEETATKTVTGNNNNGLMLDPSSLYPAQLNSFIAGTPFFTPPRS.

The tract at residues 7-31 is disordered; it reads LGGRDNNSNNNKQDHHQVDKDHHHQ. A compositionally biased stretch (basic and acidic residues) spans 18–31; the sequence is KQDHHQVDKDHHHQ. Zn(2+) contacts are provided by Cys-125, Cys-128, Cys-136, Cys-141, Cys-145, and Cys-152. The segment at residues 125-152 is a DNA-binding region (zn(2)-C6 fungal-type; degenerate); sequence CQDCGNQAKKDCPHMRCRTCCKSRGFHC. Residues 175–186 show a composition bias toward polar residues; that stretch reads SLQHHSASSRET. The disordered stretch occupies residues 175–215; it reads SLQHHSASSRETQNAKRLREASGGDNNDDKDHSGGGGSALA. Residues 187-207 are compositionally biased toward basic and acidic residues; it reads QNAKRLREASGGDNNDDKDHS. The Required for homo- and heterodimerization motif lies at 269–272; the sequence is IGGH.

The protein belongs to the SHI protein family.

It localises to the nucleus. Its function is as follows. Transcription activator that binds DNA on 5'-ACTCTAC-3' and promotes auxin homeostasis-regulating gene expression (e.g. YUC genes), as well as genes affecting stamen development, cell expansion and timing of flowering. Synergistically with other SHI-related proteins, regulates gynoecium, stamen and leaf development in a dose-dependent manner, controlling apical-basal patterning. Promotes style and stigma formation, and influences vascular development during gynoecium development. May also have a role in the formation and/or maintenance of the shoot apical meristem (SAM). The protein is Protein SHI RELATED SEQUENCE 5 (SRS5) of Arabidopsis thaliana (Mouse-ear cress).